A 569-amino-acid chain; its full sequence is Glucose-6-phosphate isomerase, cytosolic 1A (569 aa).

E360 acts as the Proton donor in catalysis. Residues H391 and K516 contribute to the active site.

Belongs to the GPI family. In terms of assembly, homodimer.

It is found in the cytoplasm. It carries out the reaction alpha-D-glucose 6-phosphate = beta-D-fructose 6-phosphate. It functions in the pathway carbohydrate degradation; glycolysis; D-glyceraldehyde 3-phosphate and glycerone phosphate from D-glucose: step 2/4. This chain is Glucose-6-phosphate isomerase, cytosolic 1A (PGIC1-A), found in Clarkia lewisii (Farewell-to-spring).